The sequence spans 262 residues: 4-hydroxy-2-oxo-heptane-1,7-dioate aldolase (262 aa).

The Proton acceptor role is filled by H45. Q147 serves as a coordination point for substrate. Residue E149 participates in a divalent metal cation binding. 2 residues coordinate substrate: A174 and D175. Residue D175 participates in a divalent metal cation binding.

This sequence belongs to the HpcH/HpaI aldolase family. In terms of assembly, homohexamer; trimer of dimers. The cofactor is a divalent metal cation.

It catalyses the reaction 4-hydroxy-2-oxoheptanedioate = succinate semialdehyde + pyruvate. The protein operates within aromatic compound metabolism; 4-hydroxyphenylacetate degradation; pyruvate and succinate semialdehyde from 4-hydroxyphenylacetate: step 7/7. Its function is as follows. Catalyzes the reversible retro-aldol cleavage of 4-hydroxy-2-ketoheptane-1,7-dioate (HKHD) to pyruvate and succinic semialdehyde. The chain is 4-hydroxy-2-oxo-heptane-1,7-dioate aldolase from Shigella boydii serotype 4 (strain Sb227).